The primary structure comprises 440 residues: G-protein coupled receptor family C group 5 member C (440 aa).

Residues 1 to 22 form the signal peptide; it reads MATHRTLLMCLGLPLFFPGALA. The Extracellular segment spans residues 23–49; the sequence is QNHAPPGCSPDLDPLYYNLCDRSGAWG. The chain crosses the membrane as a helical span at residues 50–70; that stretch reads IVSEAVAGAGIITTFVLTIIL. Residues 71–84 lie on the Cytoplasmic side of the membrane; the sequence is VASLPFVQDTKKRS. Residues 85–105 traverse the membrane as a helical segment; that stretch reads LLGTQVFFLLGTLGLFCLVFA. The Extracellular segment spans residues 106-119; that stretch reads CVVKPDFSTCASRR. The chain crosses the membrane as a helical span at residues 120–140; sequence FLFGVLFAICFSCLVAHVLSL. Residues 141–155 are Cytoplasmic-facing; the sequence is NFLTRKNHGPRGWVI. A helical membrane pass occupies residues 156–176; the sequence is FTVALLLTLVEVIINTEWLII. Over 177–207 the chain is Extracellular; that stretch reads TLVRGGGQVSPLGNVSADSTMTSPCAIANMD. N190 carries an N-linked (GlcNAc...) asparagine glycan. A helical membrane pass occupies residues 208–228; the sequence is FVMALIYVMLLLLTAFLGAWP. Residues 229–240 are Cytoplasmic-facing; that stretch reads TLCGRFKRWRKH. A helical membrane pass occupies residues 241–261; it reads GVFVLLTTVISIAIWVVWIVM. At 262 to 278 the chain is on the extracellular side; sequence YTYGNEQHHSPTWDDPT. The chain crosses the membrane as a helical span at residues 279-299; sequence LAIALAANAWTFVLFYVIPEV. The Cytoplasmic portion of the chain corresponds to 300–440; it reads SQVTKPSPEQ…QVFRNPYVWD (141 aa). A phosphoserine mark is found at S343, S382, S402, and S405. Y413 carries the post-translational modification Phosphotyrosine. T422 carries the post-translational modification Phosphothreonine.

The protein belongs to the G-protein coupled receptor 3 family.

It localises to the cell membrane. Its function is as follows. This retinoic acid-inducible G-protein coupled receptor provide evidence for a possible interaction between retinoid and G-protein signaling pathways. In Mus musculus (Mouse), this protein is G-protein coupled receptor family C group 5 member C (Gprc5c).